A 1623-amino-acid polypeptide reads, in one-letter code: Histone-lysine N-methyltransferase set-9 (1623 aa).

Disordered stretches follow at residues 1–102, 112–131, 198–227, 448–600, and 645–781; these read MADG…APQQ, AADARPLTEQEQLAAERPTE, EDAVGPGSPGTQYRRNQQAGGGLPSTSVAS, QRPG…VLRP, and TGQS…DEAA. Basic and acidic residues predominate over residues 62 to 71; that stretch reads HQMENQEFYH. Residues 77–100 are compositionally biased toward low complexity; it reads EPQQIPQIPVFQPAAYNPPNYVAP. Residues 206–227 are compositionally biased toward polar residues; that stretch reads PGTQYRRNQQAGGGLPSTSVAS. Residues 554–573 are compositionally biased toward basic and acidic residues; the sequence is MTQEEKNAHFARLTTDKEKP. Residues 587-597 are compositionally biased toward pro residues; that stretch reads PHVPPPPPPLV. The span at 645-669 shows a compositional bias: polar residues; the sequence is TGQSGSSAAARQRTVSGSAARAQTY. Over residues 723 to 733 the composition is skewed to basic residues; that stretch reads HRPRGRPKGTR. The span at 772-781 shows a compositional bias: acidic residues; that stretch reads SESEGIDEAA. A PHD-type zinc finger spans residues 786–834; the sequence is TMRCHCGMDHGDGDTIECEGCKTWQHMACMGLTLKSNTSKYKCEMCLPR. The disordered stretch occupies residues 857–895; the sequence is AARKQKRKSEPVEQKQKSSQPSTSRKSAPMALQQPAEPR. The span at 873-882 shows a compositional bias: polar residues; it reads KSSQPSTSRK. In terms of domain architecture, SET spans 965–1056; the sequence is MSSEVKRQPG…RNTEVTLPFD (92 aa). Composition is skewed to basic and acidic residues over residues 1089 to 1157 and 1172 to 1194; these read AERH…KKME and AREERRIQQAEEMFRRQEEEGKR. 2 disordered regions span residues 1089-1318 and 1356-1623; these read AERH…NVAP and LLAG…TRWN. Positions 1093–1201 form a coiled coil; sequence RAMDHKKQEA…GKRKEARRRS (109 aa). Polar residues predominate over residues 1242 to 1252; it reads TTQPSTSSFAT. Over residues 1282 to 1293 the composition is skewed to low complexity; that stretch reads ATTVATPKATTA. A coiled-coil region spans residues 1364 to 1401; sequence FSEVRAQIEEENRMKERSRKREAKKKAVEKEKKEHRKE. Composition is skewed to basic and acidic residues over residues 1365 to 1378, 1388 to 1406, 1413 to 1429, and 1447 to 1464; these read SEVRAQIEEENRMK, KKAVEKEKKEHRKEPKKTN, KSEKAVEKAVEKVEKKP, and KKTEEVDGIEREASESSS. Residues 1533-1544 show a composition bias toward polar residues; sequence SSSNTAPTTTIA.

It belongs to the class V-like SAM-binding methyltransferase superfamily. As to expression, predominantly expressed in the germline (at protein level).

It is found in the nucleus. The catalysed reaction is L-lysyl-[histone] + S-adenosyl-L-methionine = N(6)-methyl-L-lysyl-[histone] + S-adenosyl-L-homocysteine + H(+). Histone methyltransferase. Might play a role in transcriptional regulation. Together with set-26, negatively regulates lifespan in a germline-independent, partially daf-16-dependent fashion. Together with set-26, plays a role in germline development and maintenance and might play a role in the restriction of the trimethylation mark on histone H3 'Lys-4'(H3K4me3) to target genes specifically in the germline. The sequence is that of Histone-lysine N-methyltransferase set-9 from Caenorhabditis elegans.